Reading from the N-terminus, the 324-residue chain is Cytochrome c biogenesis protein CcsA (324 aa).

8 helical membrane passes run 15 to 35, 44 to 64, 71 to 91, 98 to 118, 143 to 163, 228 to 248, 255 to 275, and 289 to 309; these read FSIV…DEII, GMIA…IYSG, LYES…VPYF, LSTI…SGLL, MILG…LLVL, VISL…VWAN, WNWD…AVYL, and AIVA…VNLL.

Belongs to the CcmF/CycK/Ccl1/NrfE/CcsA family. As to quaternary structure, may interact with Ccs1.

The protein resides in the plastid. It is found in the chloroplast thylakoid membrane. Its function is as follows. Required during biogenesis of c-type cytochromes (cytochrome c6 and cytochrome f) at the step of heme attachment. This Daucus carota (Wild carrot) protein is Cytochrome c biogenesis protein CcsA.